The sequence spans 506 residues: 2-isopropylmalate synthase (506 aa).

A Pyruvate carboxyltransferase domain is found at 4-266 (ILFMDTTLRD…EPSMTLKEIK (263 aa)). Asp13, His201, His203, and Asn237 together coordinate Mn(2+). Residues 390–506 (NITQLQVHFV…KLKSFIQLVK (117 aa)) form a regulatory domain region.

It belongs to the alpha-IPM synthase/homocitrate synthase family. LeuA type 1 subfamily. As to quaternary structure, homodimer. The cofactor is Mn(2+).

The protein resides in the cytoplasm. The enzyme catalyses 3-methyl-2-oxobutanoate + acetyl-CoA + H2O = (2S)-2-isopropylmalate + CoA + H(+). It participates in amino-acid biosynthesis; L-leucine biosynthesis; L-leucine from 3-methyl-2-oxobutanoate: step 1/4. Its function is as follows. Catalyzes the condensation of the acetyl group of acetyl-CoA with 3-methyl-2-oxobutanoate (2-ketoisovalerate) to form 3-carboxy-3-hydroxy-4-methylpentanoate (2-isopropylmalate). The sequence is that of 2-isopropylmalate synthase from Bacillus cereus (strain ATCC 10987 / NRS 248).